The following is a 745-amino-acid chain: Translation initiation factor IF-2 (745 aa).

The disordered stretch occupies residues 1–154; it reads MSDKPRRDTG…PAARPVVRPR (154 aa). Residues 36-56 show a composition bias toward polar residues; that stretch reads TGRSPNASTGGNRSAGNQAGN. A compositionally biased stretch (low complexity) spans 68–98; that stretch reads ATTPAPNRNTPPAGARQGGAANARTGTPPVA. The span at 99 to 113 shows a compositional bias: gly residues; that stretch reads RGGGGGVTPPTGRGG. The segment covering 114–126 has biased composition (low complexity); that stretch reads NNPRAARNQPRSR. The span at 127-138 shows a compositional bias: basic and acidic residues; the sequence is QQPEEREREHVL. Residues 241-410 form the tr-type G domain; that stretch reads PRPPVVTIMG…LLVADLEDLR (170 aa). Residues 250–257 form a G1 region; it reads GHVDHGKT. 250-257 contacts GTP; it reads GHVDHGKT. Residues 275–279 are G2; the sequence is GITQH. The tract at residues 296–299 is G3; it reads DTPG. GTP is bound by residues 296–300 and 350–353; these read DTPGH and NKID. The G4 stretch occupies residues 350-353; the sequence is NKID. A G5 region spans residues 386 to 388; the sequence is SAR.

The protein belongs to the TRAFAC class translation factor GTPase superfamily. Classic translation factor GTPase family. IF-2 subfamily.

Its subcellular location is the cytoplasm. In terms of biological role, one of the essential components for the initiation of protein synthesis. Protects formylmethionyl-tRNA from spontaneous hydrolysis and promotes its binding to the 30S ribosomal subunits. Also involved in the hydrolysis of GTP during the formation of the 70S ribosomal complex. The protein is Translation initiation factor IF-2 of Chloroflexus aurantiacus (strain ATCC 29366 / DSM 635 / J-10-fl).